A 221-amino-acid polypeptide reads, in one-letter code: Small ribosomal subunit protein uS3c (221 aa).

One can recognise a KH type-2 domain in the interval 43 to 121 (IQNYIQKNMR…KLKIAITKIA (79 aa)).

Belongs to the universal ribosomal protein uS3 family. In terms of assembly, part of the 30S ribosomal subunit.

It localises to the plastid. The protein localises to the chloroplast. This is Small ribosomal subunit protein uS3c (rps3) from Jasminum nudiflorum (Winter jasmine).